The following is a 264-amino-acid chain: Glutamate racemase (264 aa).

Substrate is bound by residues 10–11 and 42–43; these read DS and YG. The active-site Proton donor/acceptor is the Cys73. 74 to 75 is a binding site for substrate; sequence NT. The Proton donor/acceptor role is filled by Cys183. Residue 184–185 coordinates substrate; it reads TH.

The protein belongs to the aspartate/glutamate racemases family.

It catalyses the reaction L-glutamate = D-glutamate. The protein operates within cell wall biogenesis; peptidoglycan biosynthesis. Provides the (R)-glutamate required for cell wall biosynthesis. In Streptococcus pyogenes serotype M6 (strain ATCC BAA-946 / MGAS10394), this protein is Glutamate racemase.